We begin with the raw amino-acid sequence, 82 residues long: UPF0729 protein C18orf32 homolog (82 aa).

A necessary for its localzation to the endoplasmic reticulum and lipid droplets region spans residues 1 to 37 (MVCIPCIVIPVLLWVYKKFLEPIVYPFISPIINRIWP). The interval 46 to 82 (TSAKKEESNGTCKASGTSITNGSVSRGEEAVPDKKTD) is disordered. A compositionally biased stretch (polar residues) spans 54–69 (NGTCKASGTSITNGSV). The segment covering 71–82 (RGEEAVPDKKTD) has biased composition (basic and acidic residues).

It belongs to the UPF0729 family.

The protein resides in the endoplasmic reticulum. It localises to the lipid droplet. This chain is UPF0729 protein C18orf32 homolog, found in Xenopus tropicalis (Western clawed frog).